Here is a 214-residue protein sequence, read N- to C-terminus: Neuromodulin (214 aa).

The disordered stretch occupies residues 1–214; sequence MLCCMRRTKQ…EEAKPDQENA (214 aa). S-palmitoyl cysteine attachment occurs at residues cysteine 3 and cysteine 4. Composition is skewed to basic and acidic residues over residues 9–33, 52–88, and 95–122; these read KQVE…DKAH, MKDD…KTEE, and LEVK…KDTP. Residues 32–61 enclose the IQ domain; the sequence is AHKAATKIQASFRGHIIRKKMKDDKKDDNS. Positions 124–133 are enriched in low complexity; it reads EENQASAESE. Basic and acidic residues-rich tracts occupy residues 150–160, 168–193, and 205–214; these read QAKEESKKADV, ASEK…EIKA, and EEAKPDQENA.

It belongs to the neuromodulin family. In terms of assembly, binds calmodulin with a greater affinity in the absence of Ca(2+) than in its presence. Post-translationally, palmitoylated. Palmitoylation is essential for plasma membrane association.

The protein resides in the cell membrane. Its subcellular location is the cell projection. It localises to the growth cone membrane. The protein localises to the synapse. It is found in the filopodium membrane. In terms of biological role, this protein is associated with nerve growth. It is a major component of the motile 'growth cones' that form the tips of elongating axons. Plays a role in axonal and dendritic filopodia induction. The chain is Neuromodulin (gap43) from Xenopus laevis (African clawed frog).